A 174-amino-acid polypeptide reads, in one-letter code: ATP-dependent protease subunit HslV (174 aa).

Threonine 2 is an active-site residue. 3 residues coordinate Na(+): glycine 157, cysteine 160, and threonine 163.

The protein belongs to the peptidase T1B family. HslV subfamily. In terms of assembly, a double ring-shaped homohexamer of HslV is capped on each side by a ring-shaped HslU homohexamer. The assembly of the HslU/HslV complex is dependent on binding of ATP.

Its subcellular location is the cytoplasm. The enzyme catalyses ATP-dependent cleavage of peptide bonds with broad specificity.. Its activity is regulated as follows. Allosterically activated by HslU binding. Protease subunit of a proteasome-like degradation complex believed to be a general protein degrading machinery. This Shewanella denitrificans (strain OS217 / ATCC BAA-1090 / DSM 15013) protein is ATP-dependent protease subunit HslV.